A 390-amino-acid chain; its full sequence is Dynein regulatory complex subunit 5 (390 aa).

LRR repeat units follow at residues 182–205 (TETLTHLDLSNNSLDDDKVRMLAS), 210–233 (NLSITHLNLSHNKIADRGVRALAK), and 238–261 (HSVISLLELHDNQIHTEGAESLAR).

The protein belongs to the DRC5 family. As to quaternary structure, component of the nexin-dynein regulatory complex (N-DRC). Interacts with DRC1, DRC2, DRC3, DRC4, DRC7 and DRC11.

The protein localises to the cell projection. It localises to the cilium. Its subcellular location is the flagellum. It is found in the cytoplasm. The protein resides in the cytoskeleton. The protein localises to the flagellum axoneme. Component of the nexin-dynein regulatory complex (N-DRC) a key regulator of ciliary/flagellar motility which maintains the alignment and integrity of the distal axoneme and regulates microtubule sliding in motile axonemes. May play a role in the assembly of N-DRC. This Chlamydomonas reinhardtii (Chlamydomonas smithii) protein is Dynein regulatory complex subunit 5.